We begin with the raw amino-acid sequence, 321 residues long: Probable protein phosphatase methylesterase 1 (321 aa).

Residues S170, D195, and H307 contribute to the active site.

The protein belongs to the AB hydrolase superfamily.

The catalysed reaction is [phosphatase 2A protein]-C-terminal L-leucine methyl ester + H2O = [phosphatase 2A protein]-C-terminal L-leucine + methanol + H(+). Functionally, demethylates proteins that have been reversibly carboxymethylated. The polypeptide is Probable protein phosphatase methylesterase 1 (ppme1) (Dictyostelium discoideum (Social amoeba)).